We begin with the raw amino-acid sequence, 218 residues long: Uridine kinase (218 aa).

16 to 23 (GGSGSGKT) contributes to the ATP binding site.

It belongs to the uridine kinase family.

The protein resides in the cytoplasm. It carries out the reaction uridine + ATP = UMP + ADP + H(+). It catalyses the reaction cytidine + ATP = CMP + ADP + H(+). It participates in pyrimidine metabolism; CTP biosynthesis via salvage pathway; CTP from cytidine: step 1/3. Its pathway is pyrimidine metabolism; UMP biosynthesis via salvage pathway; UMP from uridine: step 1/1. The protein is Uridine kinase of Limosilactobacillus reuteri (strain DSM 20016) (Lactobacillus reuteri).